A 61-amino-acid polypeptide reads, in one-letter code: Small ribosomal subunit protein uS14 (61 aa).

Zn(2+) is bound by residues C24, C27, C40, and C43.

It belongs to the universal ribosomal protein uS14 family. Zinc-binding uS14 subfamily. In terms of assembly, part of the 30S ribosomal subunit. Contacts proteins S3 and S10. Zn(2+) is required as a cofactor.

Binds 16S rRNA, required for the assembly of 30S particles and may also be responsible for determining the conformation of the 16S rRNA at the A site. The protein is Small ribosomal subunit protein uS14 of Ruminiclostridium cellulolyticum (strain ATCC 35319 / DSM 5812 / JCM 6584 / H10) (Clostridium cellulolyticum).